A 188-amino-acid polypeptide reads, in one-letter code: GMP synthase [glutamine-hydrolyzing] subunit A (188 aa).

Residues 2-188 (KVGLVYYGGQ…FKNFLGVCRK (187 aa)) form the Glutamine amidotransferase type-1 domain. Residue C79 is the Nucleophile of the active site. Catalysis depends on residues H166 and E168.

As to quaternary structure, heterodimer composed of a glutamine amidotransferase subunit (A) and a GMP-binding subunit (B).

It carries out the reaction XMP + L-glutamine + ATP + H2O = GMP + L-glutamate + AMP + diphosphate + 2 H(+). It participates in purine metabolism; GMP biosynthesis; GMP from XMP (L-Gln route): step 1/1. Functionally, catalyzes the synthesis of GMP from XMP. In Saccharolobus solfataricus (strain ATCC 35092 / DSM 1617 / JCM 11322 / P2) (Sulfolobus solfataricus), this protein is GMP synthase [glutamine-hydrolyzing] subunit A.